A 366-amino-acid polypeptide reads, in one-letter code: Latent membrane protein 1 (366 aa).

Over 1–23 (MERDLERGPPGPPRPPLGPPLSS) the chain is Cytoplasmic. A helical transmembrane segment spans residues 24–44 (SIGLALLLLLLALLFWLYIVL). Residues 45 to 51 (SNWTGGA) lie on the Extracellular side of the membrane. A helical membrane pass occupies residues 52 to 72 (LLVLYSFALMLIIIILIIFIF). At 73–75 (RRD) the chain is on the cytoplasmic side. Residues 76 to 96 (LLCPLGGLGLLLLMVTLLLIA) traverse the membrane as a helical segment. Topologically, residues 97–106 (LWNLHGQALY) are extracellular. The chain crosses the membrane as a helical span at residues 107–127 (LGIVLFIFGCLLVLGLWIYFL). Topologically, residues 128 to 139 (EILWRLGATIWQ) are cytoplasmic. Residues 140-160 (LLAFILAFFLAIILLIIALYL) form a helical membrane-spanning segment. Topologically, residues 161–163 (QQN) are extracellular. Residues 164–184 (WWTLLVDLLWLLLFMAILIWM) traverse the membrane as a helical segment. Residues 185–366 (YFHGPRHTDE…HGPVQLSYYD (182 aa)) are Cytoplasmic-facing. The interval 194-232 (EHHHDDSLPHPQQATDDSSHESDSNSNEGRHHLLVSGAG) is CTAR1. The interval 194–366 (EHHHDDSLPH…HGPVQLSYYD (173 aa)) is disordered. The Interaction with host TRAF proteins motif lies at 204-208 (PQQAT). The span at 210–224 (DSSHESDSNSNEGRH) shows a compositional bias: basic and acidic residues. 2 stretches are compositionally biased toward low complexity: residues 251–267 (NGPQ…PQDP) and 337–346 (PHLPTLLLGT). The CTAR2 stretch occupies residues 332–366 (GGGGDPHLPTLLLGTSGSGGDDDDPHGPVQLSYYD).

The protein belongs to the herpesviridae LMP-1 family. In terms of assembly, interacts (via PXQXT motif) with host tumor necrosis factor receptor-associated factor (TRAF) proteins TRAF1, TRAF2, TRAF3 and TRAF5. Interacts with human protein ZMYND11; leading to negatively regulate NF-kappa-B activation. Interacts with host UBE2I; this interaction induces the sumoylation of various cellular proteins. Interacts with host IRF7. Post-translationally, ubiquitinated on the N-terminus.

It is found in the host cell membrane. Functionally, acts as a CD40 functional homolog to prevent apoptosis of infected B-lymphocytes and drive their proliferation. Functions as a constitutively active tumor necrosis factor receptor that induces the activation of several signaling pathways, including those of the NF-kappa-B family. LMP1 signaling leads to up-regulation of antiapoptotic proteins and provide growth signals in latently infected cells. Interacts with host UBE2I and subsequently affects the sumoylation state of several cellular proteins. For example, induces the sumoylation of host IRF7 thereby limiting its transcriptional activity and modulating the activation of innate immune responses. Also inhibits host IFN-alpha-stimulated STAT2 nuclear translocation and interferon-stimulated response element transcriptional activity by interacting with and inhibiting host TYK2. Induces SUMO expression during viral latency thereby dysregulating the host sumoylation processes. The chain is Latent membrane protein 1 (LMP1) from Homo sapiens (Human).